A 393-amino-acid chain; its full sequence is Bifunctional enzyme Fae/Hps (393 aa).

The tract at residues 1 to 161 (MYLIGEALIG…HEKDRAAHAV (161 aa)) is formaldehyde-activating enzyme. His17 serves as the catalytic Proton donor. Substrate-binding residues include Asp19, Leu48, Lys66, Thr68, and Gln83. Positions 162–393 (MGFKVPRLWD…IDQFRIMTDF (232 aa)) are 3-hexulose-6-phosphate synthase.

This sequence in the N-terminal section; belongs to the formaldehyde-activating enzyme family. The protein in the C-terminal section; belongs to the HPS/KGPDC family. HPS subfamily.

The catalysed reaction is 5,6,7,8-tetrahydromethanopterin + formaldehyde = 5,10-methylenetetrahydromethanopterin + H2O. The enzyme catalyses D-ribulose 5-phosphate + formaldehyde = D-arabino-hex-3-ulose 6-phosphate. It participates in carbohydrate biosynthesis; D-ribose 5-phosphate biosynthesis. Functionally, catalyzes the condensation of formaldehyde with tetrahydromethanopterin (H(4)MPT) to 5,10-methylenetetrahydromethanopterin. Catalyzes the reversible formation of ribulose-5-phosphate and formaldehyde from 3-hexulose-6-phosphate. In Methanospirillum hungatei JF-1 (strain ATCC 27890 / DSM 864 / NBRC 100397 / JF-1), this protein is Bifunctional enzyme Fae/Hps.